Consider the following 269-residue polypeptide: Regulating synaptic membrane exocytosis protein 4 (269 aa).

Residues 115–233 (PMGDVEIGLQ…DLTTLAVGWY (119 aa)) form the C2 domain. Residues serine 254 and serine 257 each carry the phosphoserine modification.

In terms of assembly, binds PPFIA3. Does not bind RAB3.

It is found in the synapse. Regulates synaptic membrane exocytosis. The polypeptide is Regulating synaptic membrane exocytosis protein 4 (Rims4) (Mus musculus (Mouse)).